The sequence spans 63 residues: Jingdongin-1 (63 aa).

A signal peptide spans Met-1–Cys-22. Residues Glu-23–Glu-44 constitute a propeptide that is removed on maturation. A disulfide bridge connects residues Cys-57 and Cys-63.

In terms of tissue distribution, expressed by the skin glands.

The protein localises to the secreted. In terms of biological role, the synthetic peptide has antimicrobial activity against Gram-negative bacterium B.dysenteriae (MIC=35 ug/ml), against Gram-positive bacteria S.aureus ATCC 2592 (MIC=4.7 ug/ml) and B.subtilis ATCC 6633 (MIC=9.38 ug/ml) and against fungus C.albicans (MIC=18.75 ug/ml). Has no activity against Gram-negative bacterium E.coli ATCC 25922 but exhibits low hemolytic activity at concentrations up to 200 ug/ml. The chain is Jingdongin-1 from Amolops jingdongensis (Chinese torrent frog).